A 198-amino-acid polypeptide reads, in one-letter code: DnaJ homolog subfamily C member 12 (198 aa).

The residue at position 1 (Met-1) is an N-acetylmethionine. One can recognise a J domain in the interval 14–79; it reads DYYALLGCDE…ESRARYDHWR (66 aa). The tract at residues 114–177 is disordered; the sequence is EGSGQTFTSS…GLSDLNCGHL (64 aa). Residues 116-125 are compositionally biased toward polar residues; that stretch reads SGQTFTSSVP. Residues 126–156 show a composition bias toward basic and acidic residues; it reads NKERSEQRETKKGDPDSNPEKMKQKEPKFPE. Phosphoserine is present on residues Ser-160, Ser-166, and Ser-182.

In terms of assembly, interacts with HSPA8. Interacts with TPH1. Interacts with TPH2. Highest levels of expression are detected in kidney, pineal gland, and raphe nuclei in the brain where it localizes to serotonerigic neurons.

The protein localises to the cytoplasm. Functionally, probable co-chaperone that participates in the proper folding of biopterin-dependent aromatic amino acid hydroxylases, which include phenylalanine-4-hydroxylase (PAH), tyrosine 3-monooxygenase (TH) and peripheral and neuronal tryptophan hydroxylases (TPH1 and TPH2). The sequence is that of DnaJ homolog subfamily C member 12 (Dnajc12) from Mus musculus (Mouse).